Reading from the N-terminus, the 362-residue chain is MGNIFGHLFRITTFGESHGGGVGVVIDGCPPRIEISETEIQLELDRRRPGQSKITTPRQESDTCEIISGVFEGKTLGTSIAILVRNKDARSQDYDEMALKYRPSHADATYDAKYGIRNWKGGGRSSARETIGRVAAGAIAKKILQQVAGVEIVAYVKRIKDLEAIINPETVTLEEVESNIVRCPDQDAAQKMIDLIDQTRREKDSIGGVVECVMRNVPKGLGEPVFDKLEADLAKGMMSLPATKGFEIGSGFAGTLLTGSEHNDEFYTDEAGNIRTVTNLSGGIQGGISNGENIIIRVAFKPTATIGKEQQTVTQTGEETTLAAKGRHDPCVLPRAVPMVEAMAALVLCDHLLRHHGQCKTV.

NADP(+) is bound at residue R47. FMN contacts are provided by residues 124–126, G286, 301–305, and R327; these read RSS and KPTAT.

This sequence belongs to the chorismate synthase family. In terms of assembly, homotetramer. Requires FMNH2 as cofactor.

It carries out the reaction 5-O-(1-carboxyvinyl)-3-phosphoshikimate = chorismate + phosphate. Its pathway is metabolic intermediate biosynthesis; chorismate biosynthesis; chorismate from D-erythrose 4-phosphate and phosphoenolpyruvate: step 7/7. Its function is as follows. Catalyzes the anti-1,4-elimination of the C-3 phosphate and the C-6 proR hydrogen from 5-enolpyruvylshikimate-3-phosphate (EPSP) to yield chorismate, which is the branch point compound that serves as the starting substrate for the three terminal pathways of aromatic amino acid biosynthesis. This reaction introduces a second double bond into the aromatic ring system. The sequence is that of Chorismate synthase from Gloeothece citriformis (strain PCC 7424) (Cyanothece sp. (strain PCC 7424)).